Reading from the N-terminus, the 929-residue chain is Isoleucine--tRNA ligase (929 aa).

A 'HIGH' region motif is present at residues 58 to 68 (PYANGDIHIGH). E563 contacts L-isoleucyl-5'-AMP. The short motif at 605–609 (KMSKS) is the 'KMSKS' region element. K608 serves as a coordination point for ATP. 4 residues coordinate Zn(2+): C892, C895, C912, and C915.

The protein belongs to the class-I aminoacyl-tRNA synthetase family. IleS type 1 subfamily. As to quaternary structure, monomer. It depends on Zn(2+) as a cofactor.

The protein resides in the cytoplasm. It catalyses the reaction tRNA(Ile) + L-isoleucine + ATP = L-isoleucyl-tRNA(Ile) + AMP + diphosphate. Its function is as follows. Catalyzes the attachment of isoleucine to tRNA(Ile). As IleRS can inadvertently accommodate and process structurally similar amino acids such as valine, to avoid such errors it has two additional distinct tRNA(Ile)-dependent editing activities. One activity is designated as 'pretransfer' editing and involves the hydrolysis of activated Val-AMP. The other activity is designated 'posttransfer' editing and involves deacylation of mischarged Val-tRNA(Ile). This is Isoleucine--tRNA ligase from Neisseria meningitidis serogroup B (strain ATCC BAA-335 / MC58).